The chain runs to 259 residues: Ribosomal RNA small subunit methyltransferase A (259 aa).

The S-adenosyl-L-methionine site is built by Asn-13, Leu-15, Gly-39, Glu-60, Asp-84, and Asn-101.

Belongs to the class I-like SAM-binding methyltransferase superfamily. rRNA adenine N(6)-methyltransferase family. RsmA subfamily.

The protein resides in the cytoplasm. The catalysed reaction is adenosine(1518)/adenosine(1519) in 16S rRNA + 4 S-adenosyl-L-methionine = N(6)-dimethyladenosine(1518)/N(6)-dimethyladenosine(1519) in 16S rRNA + 4 S-adenosyl-L-homocysteine + 4 H(+). Its function is as follows. Specifically dimethylates two adjacent adenosines (A1518 and A1519) in the loop of a conserved hairpin near the 3'-end of 16S rRNA in the 30S particle. May play a critical role in biogenesis of 30S subunits. In Mesomycoplasma hyopneumoniae (strain J / ATCC 25934 / NCTC 10110) (Mycoplasma hyopneumoniae), this protein is Ribosomal RNA small subunit methyltransferase A.